Consider the following 342-residue polypeptide: Apurinic-apyrimidinic endonuclease 1 (342 aa).

Zn(2+)-binding residues include H61, E136, D170, H173, H207, D220, H222, and E252. Residues 299–310 (HLNKFEKKEAKK) show a composition bias toward basic and acidic residues. Residues 299-342 (HLNKFEKKEAKKDRKKKSKDGDQTTLLLRKKQKLGNAEVKSLDE) form a disordered region.

The protein belongs to the AP endonuclease 2 family. Requires Zn(2+) as cofactor.

It localises to the nucleus. Its function is as follows. DNA repair enzyme that cleaves apurinic/apyrimidinic (AP) sites and removes 3'-blocking groups present at single strand breaks of damaged DNA. Provides back-up AP endonuclease (APE) activity to apn2 together with uve1. The polypeptide is Apurinic-apyrimidinic endonuclease 1 (apn1) (Schizosaccharomyces pombe (strain 972 / ATCC 24843) (Fission yeast)).